A 128-amino-acid polypeptide reads, in one-letter code: NHP2-like protein 1 (128 aa).

An N-acetylmethionine modification is found at Met-1. N-acetylthreonine; in NHP2-like protein 1, N-terminally processed is present on Thr-2. At Lys-21 the chain carries N6-acetyllysine. The segment at 36-48 is interaction with U4 snRNA and U4atac snRNA; sequence RKGANEATKTLNR. Positions 96–128 are important for U4 snRNA-binding; the sequence is SRPVIACSVTIKEGSQLKQQIQSIQQSIERLLV. A Phosphoserine modification is found at Ser-122.

Belongs to the eukaryotic ribosomal protein eL8 family. In terms of assembly, identified in the spliceosome B complex. Component of the U4/U6-U5 tri-snRNP complex composed of the U4, U6 and U5 snRNAs and at least PRPF3, PRPF4, PRPF6, PRPF8, PRPF31, SNRNP200, TXNL4A, WDR57, SNRNP40, DDX23, CD2BP2, PPIH, NHP2L1, EFTUD2, SART1 and USP39. Interacts with RAD17 and PRPF31. The complex formed by SNU13 and PRPF31 binds U4 snRNA. The complex formed by SNU13 and PRPF31 also binds U4atac snRNA, a characteristic component of specific, less abundant spliceosomal complexes. Part of the small subunit (SSU) processome, composed of more than 70 proteins and the RNA chaperone small nucleolar RNA (snoRNA) U3. Core component of box C/D small nucleolar ribonucleoprotein (snoRNP) particles; the core proteins SNU13, NOP56, NOP58 and FBL or FBLL1 assemble stepwise onto the snoRNA.

Its subcellular location is the nucleus. It localises to the nucleolus. Its function is as follows. Part of the small subunit (SSU) processome, first precursor of the small eukaryotic ribosomal subunit. During the assembly of the SSU processome in the nucleolus, many ribosome biogenesis factors, an RNA chaperone and ribosomal proteins associate with the nascent pre-rRNA and work in concert to generate RNA folding, modifications, rearrangements and cleavage as well as targeted degradation of pre-ribosomal RNA by the RNA exosome. Involved in pre-mRNA splicing as component of the spliceosome. Binds to the 5'-stem-loop of U4 snRNA and thereby contributes to spliceosome assembly. The protein undergoes a conformational change upon RNA-binding. Core component of box C/D small nucleolar ribonucleoprotein (snoRNP) complexes that function in methylation of multiple sites on ribosomal RNAs (rRNAs) and messenger RNAs (mRNAs). In Bos taurus (Bovine), this protein is NHP2-like protein 1.